An 896-amino-acid chain; its full sequence is Valine--tRNA ligase (896 aa).

Positions 48-58 (PNVTGSLHMGH) match the 'HIGH' region motif. The short motif at 543 to 547 (KMSKS) is the 'KMSKS' region element. Lysine 546 provides a ligand contact to ATP. The stretch at 830 to 896 (VIDLDAERTR…ARLGAALERL (67 aa)) forms a coiled coil.

Belongs to the class-I aminoacyl-tRNA synthetase family. ValS type 1 subfamily. Monomer.

It localises to the cytoplasm. The enzyme catalyses tRNA(Val) + L-valine + ATP = L-valyl-tRNA(Val) + AMP + diphosphate. In terms of biological role, catalyzes the attachment of valine to tRNA(Val). As ValRS can inadvertently accommodate and process structurally similar amino acids such as threonine, to avoid such errors, it has a 'posttransfer' editing activity that hydrolyzes mischarged Thr-tRNA(Val) in a tRNA-dependent manner. The sequence is that of Valine--tRNA ligase from Granulibacter bethesdensis (strain ATCC BAA-1260 / CGDNIH1).